We begin with the raw amino-acid sequence, 336 residues long: MDAWTYQFGNLSKISPFEGPQYHLAPKWAFYLQAAFMGFVFFVGTPLNAIVLFVTMKYKKLRQPLNYILVNISLGGFIFDTFSVSQVFFSALRGYYFFGYTLCAMEAAMGSIAGLVTGWSLAVLAFERYVVICKPFGSFKFGQSQALGAVALTWIIGIGCATPPFWGWSRYIPEGIGTACGPDWYTKNEEYNTESYTYFLLVSCFMMPIMIITFSYSQLLGALRAVAAQQAESASTQKAEKEVSRMVVVMVGSFVVCYGPYAITALYFSYAEDSNKDYRLVAIPSLFSKSSCVYNPLIYAFMNKQFNACIMETVFGKKIDESSEVSSKTETSSVSA.

Residues 1-29 lie on the Extracellular side of the membrane; it reads MDAWTYQFGNLSKISPFEGPQYHLAPKWA. A glycan (N-linked (GlcNAc...) asparagine) is linked at Asn-10. Residues 30–54 form a helical membrane-spanning segment; the sequence is FYLQAAFMGFVFFVGTPLNAIVLFV. Over 55–66 the chain is Cytoplasmic; sequence TMKYKKLRQPLN. Residues 67–91 form a helical membrane-spanning segment; the sequence is YILVNISLGGFIFDTFSVSQVFFSA. At 92-106 the chain is on the extracellular side; that stretch reads LRGYYFFGYTLCAME. Residues Cys-103 and Cys-180 are joined by a disulfide bond. The helical transmembrane segment at 107 to 126 threads the bilayer; the sequence is AAMGSIAGLVTGWSLAVLAF. Residues 127–145 are Cytoplasmic-facing; that stretch reads ERYVVICKPFGSFKFGQSQ. The helical transmembrane segment at 146–169 threads the bilayer; it reads ALGAVALTWIIGIGCATPPFWGWS. Residues 170-195 lie on the Extracellular side of the membrane; the sequence is RYIPEGIGTACGPDWYTKNEEYNTES. A helical transmembrane segment spans residues 196–223; that stretch reads YTYFLLVSCFMMPIMIITFSYSQLLGAL. Residues 224–245 lie on the Cytoplasmic side of the membrane; it reads RAVAAQQAESASTQKAEKEVSR. A helical transmembrane segment spans residues 246 to 269; it reads MVVVMVGSFVVCYGPYAITALYFS. Residues 270–277 lie on the Extracellular side of the membrane; it reads YAEDSNKD. The chain crosses the membrane as a helical span at residues 278-302; that stretch reads YRLVAIPSLFSKSSCVYNPLIYAFM. Lys-289 is modified (N6-(retinylidene)lysine). Topologically, residues 303-336 are cytoplasmic; it reads NKQFNACIMETVFGKKIDESSEVSSKTETSSVSA.

It belongs to the G-protein coupled receptor 1 family. Opsin subfamily. Phosphorylated on some or all of the serine and threonine residues present in the C-terminal region.

The protein localises to the membrane. Functionally, visual pigments are the light-absorbing molecules that mediate vision. They consist of an apoprotein, opsin, covalently linked to cis-retinal. This is Ultraviolet-sensitive opsin from Carassius auratus (Goldfish).